A 250-amino-acid chain; its full sequence is Ubiquinone/menaquinone biosynthesis C-methyltransferase UbiE (250 aa).

Residues serine 73, aspartate 94, and 122-123 (NA) each bind S-adenosyl-L-methionine.

Belongs to the class I-like SAM-binding methyltransferase superfamily. MenG/UbiE family.

It carries out the reaction a 2-demethylmenaquinol + S-adenosyl-L-methionine = a menaquinol + S-adenosyl-L-homocysteine + H(+). The catalysed reaction is a 2-methoxy-6-(all-trans-polyprenyl)benzene-1,4-diol + S-adenosyl-L-methionine = a 5-methoxy-2-methyl-3-(all-trans-polyprenyl)benzene-1,4-diol + S-adenosyl-L-homocysteine + H(+). Its pathway is quinol/quinone metabolism; menaquinone biosynthesis; menaquinol from 1,4-dihydroxy-2-naphthoate: step 2/2. It participates in cofactor biosynthesis; ubiquinone biosynthesis. Methyltransferase required for the conversion of demethylmenaquinol (DMKH2) to menaquinol (MKH2) and the conversion of 2-polyprenyl-6-methoxy-1,4-benzoquinol (DDMQH2) to 2-polyprenyl-3-methyl-6-methoxy-1,4-benzoquinol (DMQH2). This Legionella pneumophila (strain Lens) protein is Ubiquinone/menaquinone biosynthesis C-methyltransferase UbiE.